The sequence spans 356 residues: 3,4-dihydroxy-2-butanone 4-phosphate synthase (356 aa).

The tract at residues 1–211 (MNAILSDQKT…ISDIVEYRMM (211 aa)) is DHBP synthase. Residues 38–39 (RE), Asp-43, 150–154 (RIGHT), and Glu-174 each bind D-ribulose 5-phosphate. Residue Glu-39 participates in Mg(2+) binding. Mg(2+) is bound at residue His-153. Residues 212–356 (NESLIRVIAE…KSTNVNETVA (145 aa)) form a GTP cyclohydrolase II-like region.

In the N-terminal section; belongs to the DHBP synthase family. This sequence in the C-terminal section; belongs to the GTP cyclohydrolase II family. It depends on Mg(2+) as a cofactor. The cofactor is Mn(2+).

The enzyme catalyses D-ribulose 5-phosphate = (2S)-2-hydroxy-3-oxobutyl phosphate + formate + H(+). It participates in cofactor biosynthesis; riboflavin biosynthesis; 2-hydroxy-3-oxobutyl phosphate from D-ribulose 5-phosphate: step 1/1. Functionally, catalyzes the conversion of D-ribulose 5-phosphate to formate and 3,4-dihydroxy-2-butanone 4-phosphate. This Sulfurospirillum multivorans (Dehalospirillum multivorans) protein is 3,4-dihydroxy-2-butanone 4-phosphate synthase (ribB).